A 124-amino-acid polypeptide reads, in one-letter code: MASTARSLRYALAILTTSLVTPSVWAHAHLTHQYPAANAQVTAAPQAITLNFSEGVETGFSGAKITGPKNENIKTLPAKRNEQDQKQLIVPLADSLKPGTYTVDWHVVSVDGHKTKGHYTFSVK.

Residues 1-26 (MASTARSLRYALAILTTSLVTPSVWA) form the signal peptide. Cu cation contacts are provided by H27 and H113.

It belongs to the CopC family.

The protein localises to the periplasm. In Escherichia coli O6:H1 (strain CFT073 / ATCC 700928 / UPEC), this protein is Protein YobA (yobA).